Consider the following 309-residue polypeptide: ATP synthase gamma chain (309 aa).

It belongs to the ATPase gamma chain family. F-type ATPases have 2 components, CF(1) - the catalytic core - and CF(0) - the membrane proton channel. CF(1) has five subunits: alpha(3), beta(3), gamma(1), delta(1), epsilon(1). CF(0) has three main subunits: a, b and c.

The protein resides in the cell membrane. In terms of biological role, produces ATP from ADP in the presence of a proton gradient across the membrane. The gamma chain is believed to be important in regulating ATPase activity and the flow of protons through the CF(0) complex. In Ligilactobacillus salivarius (strain UCC118) (Lactobacillus salivarius), this protein is ATP synthase gamma chain.